We begin with the raw amino-acid sequence, 345 residues long: Ribonucleoside-diphosphate reductase subunit beta (345 aa).

Asp88, Glu118, and His121 together coordinate Fe cation. The active site involves Tyr125. Fe cation contacts are provided by Glu185, Glu219, and His222.

It belongs to the ribonucleoside diphosphate reductase small chain family. Tetramer of two alpha and two beta subunits. Requires Fe cation as cofactor.

The catalysed reaction is a 2'-deoxyribonucleoside 5'-diphosphate + [thioredoxin]-disulfide + H2O = a ribonucleoside 5'-diphosphate + [thioredoxin]-dithiol. Its function is as follows. Provides the precursors necessary for DNA synthesis. Catalyzes the biosynthesis of deoxyribonucleotides from the corresponding ribonucleotides. The protein is Ribonucleoside-diphosphate reductase subunit beta (nrdB) of Halalkalibacterium halodurans (strain ATCC BAA-125 / DSM 18197 / FERM 7344 / JCM 9153 / C-125) (Bacillus halodurans).